We begin with the raw amino-acid sequence, 204 residues long: Prephenate decarboxylase (204 aa).

This sequence belongs to the prephenate decarboxylase family.

The protein localises to the cytoplasm. It carries out the reaction prephenate + H(+) = 3-[(4R)-4-hydroxycyclohexa-1,5-dien-1-yl]-2-oxopropanoate + CO2. It functions in the pathway antibiotic biosynthesis; bacilysin biosynthesis. Part of the bacABCDEF operon responsible for the biosynthesis of the nonribosomally synthesized dipeptide antibiotic bacilysin, composed of L-alanine and L-anticapsin. Bacilysin is an irreversible inactivator of the glutaminase domain of glucosamine synthetase. BacA is an unusual prephenate decarboxylase that avoids the typical aromatization of the cyclohexadienol ring of prephenate. BacA catalyzes the protonation of prephenate (1-carboxy-4-hydroxy-alpha-oxo-2,5-cyclohexadiene-1-propanoic acid) at C6 position, followed by a decarboxylation to produce the endocyclic-delta(4),delta(8)-7R-dihydro-hydroxyphenylpyruvate (en-H2HPP). En-H2HPP is able to undergo a slow nonenzymatic isomerization to produce the exocyclic-delta(3),delta(5)-dihydro-hydroxyphenylpyruvate (ex-H2HPP). BacA isomerizes only the pro-R double bond in prephenate. This chain is Prephenate decarboxylase, found in Bacillus subtilis (strain 168).